Reading from the N-terminus, the 578-residue chain is CTP synthase 2 (578 aa).

The region spanning 305-564 (KIALVGKYTN…VAAASGTLGD (260 aa)) is the Glutamine amidotransferase type-1 domain. Catalysis depends on for GATase activity residues Cys404, His537, and Glu539.

The protein belongs to the CTP synthase family. Homodimer. Oligomerizes to a tetramer in the presence of its substrates UTP and ATP. It depends on Mg(2+) as a cofactor.

It is found in the cytoplasm. It catalyses the reaction UTP + L-glutamine + ATP + H2O = CTP + L-glutamate + ADP + phosphate + 2 H(+). It functions in the pathway pyrimidine metabolism; CTP biosynthesis via de novo pathway; CTP from UDP: step 2/2. Its activity is regulated as follows. Activated by GTP. Subject to allosteric product inhibition by CTP. Inhibited by p-chloromercuriphenylsulfonic acid, N-ethylmaleimide and cyclopentenylcytosine (CPEC). Functionally, catalyzes the ATP-dependent amination of UTP to CTP with either L-glutamine or ammonia as the source of nitrogen. Plays an important role in the regulation of phospholipid synthesis. The chain is CTP synthase 2 (URA8) from Saccharomyces cerevisiae (strain YJM789) (Baker's yeast).